The primary structure comprises 526 residues: Arginine/ornithine antiporter ArcD1 (526 aa).

The next 14 membrane-spanning stretches (helical) occupy residues 8–28, 41–61, 88–108, 128–148, 160–180, 220–240, 255–275, 297–317, 354–374, 378–398, 407–427, 428–448, 466–486, and 495–515; these read GIGL…GGVF, GGVV…VLSL, FISG…FAVL, LTIL…LLVM, IVLV…IVTF, VKGS…AAMM, IFGL…PFGF, VGGW…LGAW, LLLT…VADA, FVYL…LYLF, TSNI…LYYS, GWQF…LYAL, FILT…WLGL, and NTLL…YFVV.

This sequence belongs to the amino acid-polyamine-organocation (APC) superfamily. Basic amino acid/polyamine antiporter (APA) (TC 2.A.3.2) family.

The protein resides in the cell membrane. It catalyses the reaction L-ornithine(in) + L-arginine(out) = L-ornithine(out) + L-arginine(in). Its function is as follows. Catalyzes electroneutral exchange between L-arginine and L-ornithine. Can also efficiently translocate L-histidine and L-lysine. ArcD1 is the main L-arginine/L-ornithine exchanger in the arginine deiminase (ADI) pathway. In Lactococcus lactis subsp. cremoris (strain MG1363), this protein is Arginine/ornithine antiporter ArcD1.